The following is a 178-amino-acid chain: Large ribosomal subunit protein bL25 (178 aa).

The protein belongs to the bacterial ribosomal protein bL25 family. CTC subfamily. Part of the 50S ribosomal subunit; part of the 5S rRNA/L5/L18/L25 subcomplex. Contacts the 5S rRNA. Binds to the 5S rRNA independently of L5 and L18.

This is one of the proteins that binds to the 5S RNA in the ribosome where it forms part of the central protuberance. The chain is Large ribosomal subunit protein bL25 from Helicobacter pylori (strain P12).